The primary structure comprises 461 residues: V-type ATP synthase beta chain (461 aa).

It belongs to the ATPase alpha/beta chains family.

In terms of biological role, produces ATP from ADP in the presence of a proton gradient across the membrane. The V-type beta chain is a regulatory subunit. In Clostridium botulinum (strain Langeland / NCTC 10281 / Type F), this protein is V-type ATP synthase beta chain.